The following is a 1084-amino-acid chain: Histone deacetylase 4 (1084 aa).

A coiled-coil region spans residues 67–177 (REQQLQQELL…STEVKMKLQE (111 aa)). Positions 118–313 (MLAMKHQQEL…NNSSGSVSAE (196 aa)) are interaction with MEF2A. The span at 133–163 (KLERHRQEQELEKQHREQKLQQLKNKEKGKE) shows a compositional bias: basic and acidic residues. 3 disordered regions span residues 133-166 (KLERHRQEQELEKQHREQKLQQLKNKEKGKESAV), 206-226 (TQHSSLDQSSPPQSGVSTSYN), and 240-315 (PLRK…AENG). S210 bears the Phosphoserine mark. S246 carries the phosphoserine; by CaMK4 and SIK1 modification. A compositionally biased stretch (basic and acidic residues) spans 259–274 (KVAERRSSPLLRRKDG). A compositionally biased stretch (low complexity) spans 290 to 312 (SACSSAPGSGPSSPNNSSGSVSA). The PxLPxI/L motif; mediates interaction with ANKRA2 and 14-3-3 proteins signature appears at 349 to 354 (PSLPNI). The residue at position 350 (S350) is a Phosphoserine. S467 carries the phosphoserine; by CaMK4 and SIK1 modification. Disordered stretches follow at residues 509 to 531 (PKPSEPARQPESHPEETEEELRE), 548 to 585 (KEAHAQAGVQVKQEPIESDEEEAEPPREVEPGQRQPSE), and 626 to 646 (PLSRAQSSPASATFPVSVQEP). The segment covering 516–531 (RQPESHPEETEEELRE) has biased composition (basic and acidic residues). K559 is covalently cross-linked (Glycyl lysine isopeptide (Lys-Gly) (interchain with G-Cter in SUMO)). Position 565 is a phosphoserine (S565). Over residues 629 to 641 (RAQSSPASATFPV) the composition is skewed to polar residues. S632 is subject to Phosphoserine; by CaMK4. Residue S633 is modified to Phosphoserine. The segment at 655–1084 (GLVYDTLMLK…EEPMEEEPPL (430 aa)) is histone deacetylase. Zn(2+)-binding residues include C667, C669, H675, and C751. H803 is a catalytic residue. The Nuclear export signal signature appears at 1051 to 1084 (EEAETVTAMASLSVGVKPAEKRPDEEPMEEEPPL). The interval 1061–1084 (SLSVGVKPAEKRPDEEPMEEEPPL) is disordered.

Belongs to the histone deacetylase family. HD type 2 subfamily. As to quaternary structure, homodimer. Homodimerization via its N-terminal domain. Interacts with MEF2A. Interacts with MEF2C and MEF2D. Interacts with AHRR. Interacts with NR2C1. Interacts with HDAC7. Interacts with a 14-3-3 chaperone proteins in a phosphorylation dependent manner. Interacts with 14-3-3 protein YWHAB. Interacts with BTBD14B. Interacts with KDM5B. Interacts with MYOCD. Interacts with MORC2. Interacts (via PxLPxI/L motif) with ANKRA2 (via ankyrin repeats). Interacts with CUL7 (as part of the 3M complex); negatively regulated by ANKRA2. Interacts with EP300 in the presence of TFAP2C. Interacts with HSPA1A and HSPA1B leading to their deacetylation at 'Lys-77'. Interacts with ZBTB7B; the interaction allows the recruitment of HDAC4 on CD8 loci for deacetylation and possible inhibition of CD8 genes expression. Interacts with DHX36. Interacts with SIK3; this interaction leads to HDAC4 retention in the cytoplasm. Interacts with ZNF638. In terms of processing, phosphorylated by CaMK4 at Ser-246, Ser-467 and Ser-632. Phosphorylation at other residues by CaMK2D is required for the interaction with 14-3-3. Phosphorylation at Ser-350, within the PxLPxI/L motif, impairs the binding of ANKRA2 but generates a high-affinity docking site for 14-3-3. Sumoylation on Lys-559 is promoted by the E3 SUMO-protein ligase RANBP2, and prevented by phosphorylation by CaMK4. Ubiquitous.

Its subcellular location is the nucleus. The protein resides in the cytoplasm. It carries out the reaction N(6)-acetyl-L-lysyl-[histone] + H2O = L-lysyl-[histone] + acetate. Its function is as follows. Responsible for the deacetylation of lysine residues on the N-terminal part of the core histones (H2A, H2B, H3 and H4). Histone deacetylation gives a tag for epigenetic repression and plays an important role in transcriptional regulation, cell cycle progression and developmental events. Histone deacetylases act via the formation of large multiprotein complexes. Involved in muscle maturation via its interaction with the myocyte enhancer factors such as MEF2A, MEF2C and MEF2D. Involved in the MTA1-mediated epigenetic regulation of ESR1 expression in breast cancer. Deacetylates HSPA1A and HSPA1B at 'Lys-77' leading to their preferential binding to co-chaperone STUB1. The sequence is that of Histone deacetylase 4 from Homo sapiens (Human).